The sequence spans 525 residues: Coronin-2A (525 aa).

WD repeat units lie at residues N24–L71, D72–T122, A123–T170, S171–V214, L215–S259, V260–P305, and H306–K342. The stretch at Q485–Q524 forms a coiled coil.

The protein belongs to the WD repeat coronin family. In terms of assembly, binds actin. Component of the N-Cor repressor complex, at least composed of NCOR1, NCOR2, HDAC3, TBL1X, TBL1R, CORO2A and GPS2.

The sequence is that of Coronin-2A (CORO2A) from Homo sapiens (Human).